The sequence spans 118 residues: Basic phospholipase A2 PA-12C (118 aa).

7 cysteine pairs are disulfide-bonded: Cys11–Cys71, Cys27–Cys117, Cys29–Cys45, Cys44–Cys98, Cys51–Cys91, Cys60–Cys84, and Cys78–Cys89. The Ca(2+) site is built by Tyr28, Gly30, and Gly32. His48 is a catalytic residue. Asp49 is a binding site for Ca(2+). Asp92 is a catalytic residue.

This sequence belongs to the phospholipase A2 family. Group I subfamily. D49 sub-subfamily. The cofactor is Ca(2+). In terms of tissue distribution, expressed by the venom gland.

Its subcellular location is the secreted. The enzyme catalyses a 1,2-diacyl-sn-glycero-3-phosphocholine + H2O = a 1-acyl-sn-glycero-3-phosphocholine + a fatty acid + H(+). PLA2 catalyzes the calcium-dependent hydrolysis of the 2-acyl groups in 3-sn-phosphoglycerides. The sequence is that of Basic phospholipase A2 PA-12C from Pseudechis australis (Mulga snake).